Here is a 37-residue protein sequence, read N- to C-terminus: MKVRPSVRKICENCRLIRRKRKILVICTNPKHKQRQG.

Belongs to the bacterial ribosomal protein bL36 family.

The protein resides in the plastid. Its subcellular location is the chloroplast. The polypeptide is Large ribosomal subunit protein bL36c (Tupiella akineta (Green alga)).